The primary structure comprises 191 residues: Holliday junction branch migration complex subunit RuvA (191 aa).

Positions Met1 to Ala64 are domain I. The tract at residues Thr65–Thr136 is domain II. Residues Thr136–Gln139 are flexible linker. The interval Ala140 to Pro191 is domain III.

Belongs to the RuvA family. As to quaternary structure, homotetramer. Forms an RuvA(8)-RuvB(12)-Holliday junction (HJ) complex. HJ DNA is sandwiched between 2 RuvA tetramers; dsDNA enters through RuvA and exits via RuvB. An RuvB hexamer assembles on each DNA strand where it exits the tetramer. Each RuvB hexamer is contacted by two RuvA subunits (via domain III) on 2 adjacent RuvB subunits; this complex drives branch migration. In the full resolvosome a probable DNA-RuvA(4)-RuvB(12)-RuvC(2) complex forms which resolves the HJ.

It is found in the cytoplasm. Functionally, the RuvA-RuvB-RuvC complex processes Holliday junction (HJ) DNA during genetic recombination and DNA repair, while the RuvA-RuvB complex plays an important role in the rescue of blocked DNA replication forks via replication fork reversal (RFR). RuvA specifically binds to HJ cruciform DNA, conferring on it an open structure. The RuvB hexamer acts as an ATP-dependent pump, pulling dsDNA into and through the RuvAB complex. HJ branch migration allows RuvC to scan DNA until it finds its consensus sequence, where it cleaves and resolves the cruciform DNA. The polypeptide is Holliday junction branch migration complex subunit RuvA (Thermomicrobium roseum (strain ATCC 27502 / DSM 5159 / P-2)).